Consider the following 237-residue polypeptide: Tyrosine-protein kinase YwqD (237 aa).

Y228 carries the phosphotyrosine; by autocatalysis modification.

It belongs to the CpsD/CapB family. Autophosphorylated in vitro, which inhibits ATPase activity. Dephosphorylated by YwqE in vitro.

The enzyme catalyses L-tyrosyl-[protein] + ATP = O-phospho-L-tyrosyl-[protein] + ADP + H(+). Its function is as follows. May be involved in the regulation of capsular polysaccharide biosynthesis. Autophosphorylates in vitro. Phosphorylates and activates in vitro two UDP-glucose dehydrogenases, YwqF and TuaD, as well as the DNA-binding proteins Ssb and SsbB. In Bacillus subtilis (strain 168), this protein is Tyrosine-protein kinase YwqD (ywqD).